The chain runs to 263 residues: L-histidine 2-aminobutanoyltransferase (263 aa).

The protein belongs to the methyltransferase superfamily. CntL family. In terms of assembly, interacts with CntM.

It catalyses the reaction L-histidine + S-adenosyl-L-methionine = (2S)-2-amino-4-{[(1S)-1-carboxy-2-(1H-imidazol-4-yl)ethyl]amino}butanoate + S-methyl-5'-thioadenosine + H(+). Functionally, catalyzes the nucleophilic attack of one alpha-aminobutanoate moiety from SAM onto L-histidine to produce the intermediate (2S)-2-amino-4-{[(1S)-1-carboxy-2-(1H-imidazol-4-yl)ethyl]amino}butanoate. Functions in the biosynthesis of the metallophore pseudopaline, which is involved in the acquisition of nickel and zinc, and thus enables bacterial growth inside the host, where metal access is limited. Therefore, this enzyme probably contributes to Pseudomonas virulence. Cannot use D-histidine in place of L-histidine as substrate. The polypeptide is L-histidine 2-aminobutanoyltransferase (Pseudomonas aeruginosa (strain UCBPP-PA14)).